A 1502-amino-acid chain; its full sequence is E3 ubiquitin-protein ligase UPL4 (1502 aa).

The segment covering 1-21 has biased composition (basic and acidic residues); that stretch reads MENRGQKRMEVVEELPADKRA. Residues 1–107 are disordered; that stretch reads MENRGQKRME…DYQRQRSSGD (107 aa). Residues 22 to 46 are compositionally biased toward polar residues; it reads CNSQDFRPSTSGSSVQAQANDTNPG. The span at 67–90 shows a compositional bias: acidic residues; the sequence is DEEEQEEQDKEDSDYGSCDSDEED. Over residues 91-107 the composition is skewed to basic and acidic residues; it reads PRQRVLQDYQRQRSSGD. 4 ARM repeats span residues 143-183, 186-226, 228-265, and 267-306; these read EESL…YLCD, PPSV…KISR, EPVA…NICK, and LSSE…KIAD. The disordered stretch occupies residues 833-881; it reads CQAESSSPMEIDSESSDASQLQGSQVEDQTQLPGQQNASSSETSSEKED. The segment covering 849 to 875 has biased composition (polar residues); sequence DASQLQGSQVEDQTQLPGQQNASSSET. A K-box region spans residues 1022-1096; sequence RPVPHSEFVS…IRHHPQHLSS (75 aa). The HECT domain occupies 1128 to 1502; it reads KMMELYGNQK…TEGQGSFHLS (375 aa). Cys1469 acts as the Glycyl thioester intermediate in catalysis.

The protein belongs to the UPL family. K-HECT subfamily.

It catalyses the reaction S-ubiquitinyl-[E2 ubiquitin-conjugating enzyme]-L-cysteine + [acceptor protein]-L-lysine = [E2 ubiquitin-conjugating enzyme]-L-cysteine + N(6)-ubiquitinyl-[acceptor protein]-L-lysine.. It participates in protein modification; protein ubiquitination. In terms of biological role, probable E3 ubiquitin-protein ligase which mediates ubiquitination and subsequent proteasomal degradation of target proteins. The sequence is that of E3 ubiquitin-protein ligase UPL4 (UPL4) from Arabidopsis thaliana (Mouse-ear cress).